The chain runs to 277 residues: E3 ubiquitin-protein ligase CCNB1IP1 (277 aa).

Residues 4-51 (CEDMLLCNYRKCRIKLSGYAWVTACSHIFCDQHGSGEFSRSPAICPAC) form an RING-type; atypical zinc finger. Positions 127-182 (QQIQSKDVELTSMKGEVTSMKKVLEEYKKKFSDISEKLMERNRQYQKLQGLYDSLR) form a coiled coil.

In terms of assembly, interacts with CCNB1, UBE2L3 and NF2. Ubiquitinated; autoubiquitinated. Post-translationally, phosphorylated by CDK1 on serine or threonine residues (in vitro). As to expression, highly expressed in heart. Detected at intermediate levels in liver and kidney, and at low levels in placenta, brain and lung.

It localises to the nucleus. Its subcellular location is the chromosome. It carries out the reaction S-ubiquitinyl-[E2 ubiquitin-conjugating enzyme]-L-cysteine + [acceptor protein]-L-lysine = [E2 ubiquitin-conjugating enzyme]-L-cysteine + N(6)-ubiquitinyl-[acceptor protein]-L-lysine.. Its pathway is protein modification; protein ubiquitination. In terms of biological role, ubiquitin E3 ligase that acts as a limiting factor for crossing-over during meiosis: required during zygonema to limit the colocalization of RNF212 with MutS-gamma-associated recombination sites and thereby establish early differentiation of crossover and non-crossover sites. Later, it is directed by MutL-gamma to stably accumulate at designated crossover sites. Probably promotes the dissociation of RNF212 and MutS-gamma to allow the progression of recombination and the implementation of the final steps of crossing over. Modulates cyclin-B levels and participates in the regulation of cell cycle progression through the G2 phase. Overexpression causes delayed entry into mitosis. In Homo sapiens (Human), this protein is E3 ubiquitin-protein ligase CCNB1IP1 (CCNB1IP1).